The following is a 119-amino-acid chain: Protein phosphatase EYA4 (119 aa).

This sequence belongs to the HAD-like hydrolase superfamily. EYA family. Requires Mg(2+) as cofactor.

Its subcellular location is the cytoplasm. It localises to the nucleus. It carries out the reaction O-phospho-L-tyrosyl-[protein] + H2O = L-tyrosyl-[protein] + phosphate. Tyrosine phosphatase that specifically dephosphorylates 'Tyr-142' of histone H2AX (H2AXY142ph). 'Tyr-142' phosphorylation of histone H2AX plays a central role in DNA repair and acts as a mark that distinguishes between apoptotic and repair responses to genotoxic stress. Promotes efficient DNA repair by dephosphorylating H2AX, promoting the recruitment of DNA repair complexes containing MDC1. Its function as histone phosphatase probably explains its role in transcription regulation during organogenesis. May be involved in development of the eye. In Takifugu rubripes (Japanese pufferfish), this protein is Protein phosphatase EYA4 (eya4).